The chain runs to 2201 residues: Activating signal cointegrator 1 complex subunit 3 (2201 aa).

Ser12 carries the phosphoserine modification. Coiled coils occupy residues 18-81 (KQDN…KQIV) and 328-356 (IQSEQEKQLMKQYRREEKRIARREKKAGE). The region spanning 486–669 (ETAYNTNENM…FLHVNPCIGL (184 aa)) is the Helicase ATP-binding 1 domain. 499–506 (APTGAGKT) serves as a coordination point for ATP. Lys572 is subject to N6-acetyllysine. Residues 611–614 (DEVH) carry the DEVH box motif. The Helicase C-terminal 1 domain maps to 696–914 (QLNNMDEVCY…GTVTNVEEAV (219 aa)). Residues 978-1287 (STDLGRTASH…GAEAVCIINF (310 aa)) enclose the SEC63 1 domain. The region spanning 1336–1511 (HTLYHTDCNV…WLNIRQMGLF (176 aa)) is the Helicase ATP-binding 2 domain. 1349 to 1356 (APTGSGKT) contacts ATP. Positions 1453-1456 (DEIH) match the DEIH box motif. The region spanning 1544 to 1739 (PTFQAIRSHS…VLSDHLNAEI (196 aa)) is the Helicase C-terminal 2 domain. One can recognise an SEC63 2 domain in the interval 1812–2176 (PLTYGRIASY…LGLDQQYDIH (365 aa)).

It belongs to the helicase family. Identified in the ASCC complex that contains ASCC1, ASCC2 and ASCC3. Functions as a scaffolding subunit that interacts directly with both ASCC1 and ASCC2. Interacts directly with ALKBH3, and thereby recruits ALKBH3 to the ASCC complex. Part of the ASC-1/TRIP4 complex, that contains TRIP4, ASCC1, ASCC2 and ASCC3. Part of the RQT (ribosome quality control trigger) complex, that contains ASCC2, ASCC3 and TRIP4. Associates with ribosomes; recruited to collided ribosomes. Interacts with ZCCHC4. Interacts with ZNF598. Interacts with RPS3.

Its subcellular location is the nucleus. The protein localises to the nucleus speckle. It is found in the cytoplasm. It localises to the cytosol. It carries out the reaction Couples ATP hydrolysis with the unwinding of duplex DNA by translocating in the 3'-5' direction.. The catalysed reaction is ATP + H2O = ADP + phosphate + H(+). Functionally, ATPase involved both in DNA repair and rescue of stalled ribosomes. 3'-5' DNA helicase involved in repair of alkylated DNA: promotes DNA unwinding to generate single-stranded substrate needed for ALKBH3, enabling ALKBH3 to process alkylated N3-methylcytosine (3mC) within double-stranded regions. Also involved in activation of the ribosome quality control (RQC) pathway, a pathway that degrades nascent peptide chains during problematic translation. Drives the splitting of stalled ribosomes that are ubiquitinated in a ZNF598-dependent manner, as part of the ribosome quality control trigger (RQT) complex. Part of the ASC-1 complex that enhances NF-kappa-B, SRF and AP1 transactivation. The chain is Activating signal cointegrator 1 complex subunit 3 (ascc3) from Bos taurus (Bovine).